The primary structure comprises 261 residues: RING finger and CHY zinc finger domain-containing protein 1 (261 aa).

Residues 13 to 80 form a CHY-type zinc finger; the sequence is LAQGPRGCEH…AQQTCEDCST (68 aa). Zn(2+)-binding residues include C20, H22, C33, C34, C40, C43, H44, H50, C62, C65, C75, C78, C87, C90, H101, C102, C105, C108, H118, C119, C122, C125, H134, and C136. The CTCHY-type zinc finger occupies 82-144; sequence FGEYYCSICH…KCIENVSRQN (63 aa). The RING-type zinc finger occupies 145–189; sequence CPICLEDIHTSRVVAHVLPCGHLLHRTCYEEMLKEGYRCPLCMHS.

Monomer and homodimer. Interacts with AR, MDM2, KAT5, PLAG1, PLAGL2, COPE, UBE2D2 and GORAB/NTKLBP1. Post-translationally, subject to ubiquitination and proteasomal degradation. Interaction with PLAGL2 or KAT5 enhances protein stability. Detected in testis, liver, kidney and heart.

It localises to the nucleus. The protein localises to the nucleus speckle. It is found in the cytoplasm. The enzyme catalyses S-ubiquitinyl-[E2 ubiquitin-conjugating enzyme]-L-cysteine + [acceptor protein]-L-lysine = [E2 ubiquitin-conjugating enzyme]-L-cysteine + N(6)-ubiquitinyl-[acceptor protein]-L-lysine.. It functions in the pathway protein modification; protein ubiquitination. E3 ubiquitin-protein ligase that mediates ubiquitination of target proteins, including p53/TP53, TP73, HDAC1 and CDKN1B. Mediates ubiquitination and degradation of p53/TP53; preferentially acts on tetrameric p53/TP53. Catalyzes monoubiquitinates the translesion DNA polymerase POLH. Involved in the ribosome-associated quality control (RQC) pathway, which mediates the extraction of incompletely synthesized nascent chains from stalled ribosomes: RCHY1 acts downstream of NEMF and recognizes CAT tails associated with stalled nascent chains, leading to their ubiquitination and degradation. This is RING finger and CHY zinc finger domain-containing protein 1 (Rchy1) from Mus musculus (Mouse).